The primary structure comprises 368 residues: S-adenosylmethionine:tRNA ribosyltransferase-isomerase (368 aa).

The protein belongs to the QueA family. Monomer.

It is found in the cytoplasm. The enzyme catalyses 7-aminomethyl-7-carbaguanosine(34) in tRNA + S-adenosyl-L-methionine = epoxyqueuosine(34) in tRNA + adenine + L-methionine + 2 H(+). It functions in the pathway tRNA modification; tRNA-queuosine biosynthesis. Its function is as follows. Transfers and isomerizes the ribose moiety from AdoMet to the 7-aminomethyl group of 7-deazaguanine (preQ1-tRNA) to give epoxyqueuosine (oQ-tRNA). The protein is S-adenosylmethionine:tRNA ribosyltransferase-isomerase of Methylorubrum extorquens (strain CM4 / NCIMB 13688) (Methylobacterium extorquens).